A 230-amino-acid polypeptide reads, in one-letter code: MRKPSITITTAKAIITPDYTLIKSHSKYQLPSRFQKLDADSPERSTVVKLFYRRFMRLKPFISNVKMVKDTYRDYVRYKFMKENYELKRYLVFNPDGLRSKIKLELLSNTKCCERILPVTEMQRTLEFVLKSCSYLPETKVQKWDIARDNTYCRQILKNLLTMQYEKYRSILHRGIGHDELDVKFSHLKTTSSPLTKLNKTEKKKIPLFKVFSDFDTTLIYLNETLGTRL.

It belongs to the IRC19 family.

Functionally, involved in sporulation and maintenance of the mitochondrial DNA. Is probably involved in a pathway contributing to genomic integrity. In Saccharomyces cerevisiae (strain JAY291) (Baker's yeast), this protein is Increased recombination centers protein 19 (IRC19).